A 46-amino-acid polypeptide reads, in one-letter code: Large ribosomal subunit protein bL36B (46 aa).

This sequence belongs to the bacterial ribosomal protein bL36 family.

The protein is Large ribosomal subunit protein bL36B of Enterobacter sp. (strain 638).